Consider the following 276-residue polypeptide: U6 snRNA phosphodiesterase 1 (276 aa).

Positions 1–58 (MIVNYSSSSSEEESGSSSSPSGKRQKLDTETSEALDHGSAQRKVCKSSHLTPRLPLPE) are disordered. The Proton acceptor role is filled by His131. AMP is bound by residues 131–133 (HLS), Tyr213, and 215–221 (DPSFHIS). Residues Tyr213 and 217-221 (SFHIS) each bind UMP. His219 functions as the Proton donor in the catalytic mechanism.

It belongs to the 2H phosphoesterase superfamily. USB1 family.

The protein resides in the nucleus. The enzyme catalyses a 3'-end uridylyl-uridine-RNA = a 3'-end 2',3'-cyclophospho-uridine-RNA + uridine. The catalysed reaction is a 3'-end uridylyl-adenosine-RNA = a 3'-end 2',3'-cyclophospho-uridine-RNA + adenosine. Its function is as follows. 3'-5' RNA exonuclease that trims the 3' end of oligo(U) and oligo(A) tracts of the pre-U6 small nuclear RNA (snRNA) molecule, leading to the formation of a mature U6 snRNA 3' end-terminated with a 2',3'-cyclic phosphate. Participates in the U6 snRNA 3' end processing that prevents U6 snRNA degradation. In addition also removes uridines from the 3' end of U6atac snRNA and possibly the vault RNA VTRNA1-1. The polypeptide is U6 snRNA phosphodiesterase 1 (Danio rerio (Zebrafish)).